Consider the following 61-residue polypeptide: Small ribosomal subunit protein uS14 (61 aa).

Residues C24, C27, C40, and C43 each coordinate Zn(2+).

The protein belongs to the universal ribosomal protein uS14 family. Zinc-binding uS14 subfamily. In terms of assembly, part of the 30S ribosomal subunit. Contacts proteins S3 and S10. Zn(2+) serves as cofactor.

In terms of biological role, binds 16S rRNA, required for the assembly of 30S particles and may also be responsible for determining the conformation of the 16S rRNA at the A site. The sequence is that of Small ribosomal subunit protein uS14 from Anaeromyxobacter sp. (strain Fw109-5).